Reading from the N-terminus, the 90-residue chain is Probable Fe(2+)-trafficking protein (90 aa).

The protein belongs to the Fe(2+)-trafficking protein family.

Its function is as follows. Could be a mediator in iron transactions between iron acquisition and iron-requiring processes, such as synthesis and/or repair of Fe-S clusters in biosynthetic enzymes. The chain is Probable Fe(2+)-trafficking protein from Chromobacterium violaceum (strain ATCC 12472 / DSM 30191 / JCM 1249 / CCUG 213 / NBRC 12614 / NCIMB 9131 / NCTC 9757 / MK).